Consider the following 127-residue polypeptide: Prefoldin subunit 6 (127 aa).

An N-acetylalanine modification is found at A2. K21 carries the N6-acetyllysine modification. N6-acetyllysine; alternate is present on K66. A Glycyl lysine isopeptide (Lys-Gly) (interchain with G-Cter in SUMO1); alternate cross-link involves residue K66. A Glycyl lysine isopeptide (Lys-Gly) (interchain with G-Cter in SUMO2); alternate cross-link involves residue K66.

The protein belongs to the prefoldin subunit beta family. In terms of assembly, heterohexamer of two PFD-alpha type and four PFD-beta type subunits. Component of the PAQosome complex which is responsible for the biogenesis of several protein complexes and which consists of R2TP complex members RUVBL1, RUVBL2, RPAP3 and PIH1D1, URI complex members PFDN2, PFDN6, PDRG1, UXT and URI1 as well as ASDURF, POLR2E and DNAAF10/WDR92.

Functionally, binds specifically to cytosolic chaperonin (c-CPN) and transfers target proteins to it. Binds to nascent polypeptide chain and promotes folding in an environment in which there are many competing pathways for nonnative proteins. The chain is Prefoldin subunit 6 (Pfdn6) from Mus musculus (Mouse).